Here is a 180-residue protein sequence, read N- to C-terminus: 4-hydroxy-3-methylbut-2-enyl diphosphate reductase (180 aa).

Cys-12 lines the [4Fe-4S] cluster pocket. Positions 41 and 74 each coordinate (2E)-4-hydroxy-3-methylbut-2-enyl diphosphate. Residues His-41 and His-74 each coordinate dimethylallyl diphosphate. The isopentenyl diphosphate site is built by His-41 and His-74. [4Fe-4S] cluster is bound at residue Cys-96. (2E)-4-hydroxy-3-methylbut-2-enyl diphosphate is bound at residue His-124. His-124 contributes to the dimethylallyl diphosphate binding site. Isopentenyl diphosphate is bound at residue His-124. Glu-126 (proton donor) is an active-site residue. Thr-168 lines the (2E)-4-hydroxy-3-methylbut-2-enyl diphosphate pocket.

This sequence belongs to the IspH family. Requires [4Fe-4S] cluster as cofactor.

It carries out the reaction isopentenyl diphosphate + 2 oxidized [2Fe-2S]-[ferredoxin] + H2O = (2E)-4-hydroxy-3-methylbut-2-enyl diphosphate + 2 reduced [2Fe-2S]-[ferredoxin] + 2 H(+). The catalysed reaction is dimethylallyl diphosphate + 2 oxidized [2Fe-2S]-[ferredoxin] + H2O = (2E)-4-hydroxy-3-methylbut-2-enyl diphosphate + 2 reduced [2Fe-2S]-[ferredoxin] + 2 H(+). It participates in isoprenoid biosynthesis; dimethylallyl diphosphate biosynthesis; dimethylallyl diphosphate from (2E)-4-hydroxy-3-methylbutenyl diphosphate: step 1/1. It functions in the pathway isoprenoid biosynthesis; isopentenyl diphosphate biosynthesis via DXP pathway; isopentenyl diphosphate from 1-deoxy-D-xylulose 5-phosphate: step 6/6. In terms of biological role, catalyzes the conversion of 1-hydroxy-2-methyl-2-(E)-butenyl 4-diphosphate (HMBPP) into a mixture of isopentenyl diphosphate (IPP) and dimethylallyl diphosphate (DMAPP). Acts in the terminal step of the DOXP/MEP pathway for isoprenoid precursor biosynthesis. This Pseudomonas fluorescens protein is 4-hydroxy-3-methylbut-2-enyl diphosphate reductase.